Here is a 199-residue protein sequence, read N- to C-terminus: NAD(P)H dehydrogenase (quinone) (199 aa).

One can recognise a Flavodoxin-like domain in the interval Val-4–Val-190. Residues Ser-10–Ile-15 and Thr-78–Phe-80 contribute to the FMN site. Tyr-12 contributes to the NAD(+) binding site. Residue Trp-98 participates in substrate binding. FMN is bound by residues Ser-113 to Gly-119 and His-134.

This sequence belongs to the WrbA family. The cofactor is FMN.

It catalyses the reaction a quinone + NADH + H(+) = a quinol + NAD(+). The catalysed reaction is a quinone + NADPH + H(+) = a quinol + NADP(+). The sequence is that of NAD(P)H dehydrogenase (quinone) from Gluconacetobacter diazotrophicus (strain ATCC 49037 / DSM 5601 / CCUG 37298 / CIP 103539 / LMG 7603 / PAl5).